We begin with the raw amino-acid sequence, 303 residues long: Dihydroorotate dehydrogenase B (NAD(+)), catalytic subunit (303 aa).

FMN-binding positions include serine 21 and 45 to 46 (KG). Substrate contacts are provided by residues lysine 45 and 69–73 (NAVGL). FMN-binding residues include asparagine 99 and asparagine 127. Asparagine 127 contributes to the substrate binding site. Catalysis depends on cysteine 130, which acts as the Nucleophile. Residues lysine 165 and isoleucine 191 each coordinate FMN. 192–193 (NT) provides a ligand contact to substrate. Residues glycine 217, 243–244 (GG), and 265–266 (GT) contribute to the FMN site.

Belongs to the dihydroorotate dehydrogenase family. Type 1 subfamily. In terms of assembly, heterotetramer of 2 PyrK and 2 PyrD type B subunits. The cofactor is FMN.

The protein localises to the cytoplasm. The catalysed reaction is (S)-dihydroorotate + NAD(+) = orotate + NADH + H(+). The protein operates within pyrimidine metabolism; UMP biosynthesis via de novo pathway; orotate from (S)-dihydroorotate (NAD(+) route): step 1/1. Its function is as follows. Catalyzes the conversion of dihydroorotate to orotate with NAD(+) as electron acceptor. The chain is Dihydroorotate dehydrogenase B (NAD(+)), catalytic subunit (pyrD) from Bacteroides fragilis (strain ATCC 25285 / DSM 2151 / CCUG 4856 / JCM 11019 / LMG 10263 / NCTC 9343 / Onslow / VPI 2553 / EN-2).